The following is a 383-amino-acid chain: N-acetyldiaminopimelate deacetylase (383 aa).

Residue Asp72 is part of the active site. The active-site Proton acceptor is Glu131.

This sequence belongs to the peptidase M20A family. N-acetyldiaminopimelate deacetylase subfamily.

It catalyses the reaction N-acetyl-(2S,6S)-2,6-diaminopimelate + H2O = (2S,6S)-2,6-diaminopimelate + acetate. The protein operates within amino-acid biosynthesis; L-lysine biosynthesis via DAP pathway; LL-2,6-diaminopimelate from (S)-tetrahydrodipicolinate (acetylase route): step 3/3. In terms of biological role, catalyzes the conversion of N-acetyl-diaminopimelate to diaminopimelate and acetate. The protein is N-acetyldiaminopimelate deacetylase of Lacticaseibacillus casei (strain BL23) (Lactobacillus casei).